The following is a 300-amino-acid chain: Actin-related protein 2/3 complex subunit 2-B (300 aa).

Belongs to the ARPC2 family. As to quaternary structure, component of the Arp2/3 complex composed of actr2/arp2, actr3/arp3, arpc1 (arpc1a or arpc1b), arpc2, arpc3, arpc4 and arpc5.

The protein resides in the cytoplasm. It is found in the cytoskeleton. Its subcellular location is the cell projection. It localises to the nucleus. In terms of biological role, actin-binding component of the Arp2/3 complex, a multiprotein complex that mediates actin polymerization upon stimulation by nucleation-promoting factor (NPF). The Arp2/3 complex mediates the formation of branched actin networks in the cytoplasm, providing the force for cell motility. In addition to its role in the cytoplasmic cytoskeleton, the Arp2/3 complex also promotes actin polymerization in the nucleus, thereby regulating gene transcription and repair of damaged DNA. The Arp2/3 complex promotes homologous recombination (HR) repair in response to DNA damage by promoting nuclear actin polymerization, leading to drive motility of double-strand breaks (DSBs). The polypeptide is Actin-related protein 2/3 complex subunit 2-B (arpc2-b) (Xenopus laevis (African clawed frog)).